Consider the following 125-residue polypeptide: Homeobox protein HD-8 (125 aa).

A DNA-binding region (homeobox) is located at residues 30 to 89 (EPDTRTRKTTFQMMVLKEVFKIAPHPSTLTKADLALMIKLPLKAVQIWFQNERSRKERGG).

It is found in the nucleus. The protein is Homeobox protein HD-8 (HD-8) of Encephalitozoon cuniculi (strain GB-M1) (Microsporidian parasite).